Here is a 483-residue protein sequence, read N- to C-terminus: Cobyric acid synthase (483 aa).

Residues 252 to 430 enclose the GATase cobBQ-type domain; it reads ALQVVAVAYP…LHRLFDSGPF (179 aa). The active-site Nucleophile is cysteine 333. Residue histidine 422 is part of the active site.

This sequence belongs to the CobB/CobQ family. CobQ subfamily.

It participates in cofactor biosynthesis; adenosylcobalamin biosynthesis. Functionally, catalyzes amidations at positions B, D, E, and G on adenosylcobyrinic A,C-diamide. NH(2) groups are provided by glutamine, and one molecule of ATP is hydrogenolyzed for each amidation. This is Cobyric acid synthase from Halorhodospira halophila (strain DSM 244 / SL1) (Ectothiorhodospira halophila (strain DSM 244 / SL1)).